Consider the following 290-residue polypeptide: Cbb3-type cytochrome c oxidase subunit FixP (290 aa).

The helical transmembrane segment at 33–53 (WWVITFYITIVWAIGYWIVYP) threads the bilayer. Cytochrome c domains lie at 109 to 198 (LARA…RSLS) and 206 to 287 (YDAA…HSLG). The heme c site is built by cysteine 122, cysteine 125, histidine 126, methionine 173, cysteine 219, cysteine 222, histidine 223, and methionine 264.

It belongs to the CcoP / FixP family. Component of the cbb3-type cytochrome c oxidase at least composed of FixN, FixO, FixQ and FixP. Heme c serves as cofactor.

It is found in the cell inner membrane. Its pathway is energy metabolism; oxidative phosphorylation. C-type cytochrome. Part of the cbb3-type cytochrome c oxidase complex. FixP subunit is required for transferring electrons from donor cytochrome c via its heme groups to FixO subunit. From there, electrons are shuttled to the catalytic binuclear center of FixN subunit where oxygen reduction takes place. The complex also functions as a proton pump. The chain is Cbb3-type cytochrome c oxidase subunit FixP from Bradyrhizobium sp. (strain ORS 278).